An 80-amino-acid chain; its full sequence is U-scoloptoxin(15)-Er1a (80 aa).

Positions 1–22 (MQNKGVVLTLFLVVSMAIVISS) are cleaved as a signal peptide.

Belongs to the scoloptoxin-15 family. Contains 2 disulfide bonds. Expressed by the venom gland.

Its subcellular location is the secreted. The protein is U-scoloptoxin(15)-Er1a of Ethmostigmus rubripes (Giant centipede).